Here is a 309-residue protein sequence, read N- to C-terminus: Ribosomal RNA small subunit methyltransferase H (309 aa).

Residues 33 to 35 (GGH), Asp53, Phe79, Asp100, and Gln107 each bind S-adenosyl-L-methionine.

The protein belongs to the methyltransferase superfamily. RsmH family.

It is found in the cytoplasm. It carries out the reaction cytidine(1402) in 16S rRNA + S-adenosyl-L-methionine = N(4)-methylcytidine(1402) in 16S rRNA + S-adenosyl-L-homocysteine + H(+). Its function is as follows. Specifically methylates the N4 position of cytidine in position 1402 (C1402) of 16S rRNA. This is Ribosomal RNA small subunit methyltransferase H from Clostridium botulinum (strain Kyoto / Type A2).